Here is a 953-residue protein sequence, read N- to C-terminus: Isoleucine--tRNA ligase (953 aa).

Residues 58-68 carry the 'HIGH' region motif; the sequence is PYANGSIHIGH. L-isoleucyl-5'-AMP is bound at residue Glu577. Residues 618–622 carry the 'KMSKS' region motif; the sequence is KMSKS. Lys621 contacts ATP. Residues Cys916, Cys919, Cys936, and Cys939 each contribute to the Zn(2+) site.

The protein belongs to the class-I aminoacyl-tRNA synthetase family. IleS type 1 subfamily. In terms of assembly, monomer. The cofactor is Zn(2+).

Its subcellular location is the cytoplasm. The catalysed reaction is tRNA(Ile) + L-isoleucine + ATP = L-isoleucyl-tRNA(Ile) + AMP + diphosphate. Functionally, catalyzes the attachment of isoleucine to tRNA(Ile). As IleRS can inadvertently accommodate and process structurally similar amino acids such as valine, to avoid such errors it has two additional distinct tRNA(Ile)-dependent editing activities. One activity is designated as 'pretransfer' editing and involves the hydrolysis of activated Val-AMP. The other activity is designated 'posttransfer' editing and involves deacylation of mischarged Val-tRNA(Ile). This is Isoleucine--tRNA ligase from Aeromonas salmonicida (strain A449).